The chain runs to 619 residues: Protein CPn_1016/CP_0837/CPj1016/CpB1054 (619 aa).

The interval 591-619 is disordered; the sequence is NAKKSEEQTSPQETPEVIRVSYPTTTSAL.

The protein belongs to the chlamydial CPn_1016/CT_858/TC_0248 family.

The polypeptide is Protein CPn_1016/CP_0837/CPj1016/CpB1054 (Chlamydia pneumoniae (Chlamydophila pneumoniae)).